A 673-amino-acid chain; its full sequence is Mechanosensitive ion channel protein 2, chloroplastic (673 aa).

The transit peptide at 1 to 75 (MALYGTLQLS…SVPCRTTAFR (75 aa)) directs the protein to the chloroplast. Transmembrane regions (helical) follow at residues 107–127 (FPFVYKLVPAVALLVFSLWGL), 152–172 (YHVMTSYVQPLLLWLGALFIC), 193–213 (LNFVRSLSTVLAFAYCLSSLI), 240–260 (ALYSAVWVAAVSLFMELLGFS), and 264–284 (WLTAGGLGTVLITLAGREILT). The disordered stretch occupies residues 492–673 (KINGEDKSKS…QPNSGASTEP (182 aa)). Composition is skewed to basic and acidic residues over residues 510–525 (AEQENKGSNPKSKETS), 564–576 (TPKDTETSGTEKP), and 617–642 (GSKRTLPIEEEIHSPPMETDAKELTG). Serine 571 carries the phosphoserine modification. Residues 661-673 (SQSQPNSGASTEP) are compositionally biased toward polar residues.

The protein belongs to the MscS (TC 1.A.23) family. As to expression, widely expressed.

It is found in the plastid. Its subcellular location is the chloroplast membrane. Mechanosensitive channel that opens in response to stretch forces in the membrane lipid bilayer. Controls plastid size, shape, and perhaps division during normal plant development by altering ion flux in response to changes in membrane tension. Acts as a component of the chloroplast division machinery. This is Mechanosensitive ion channel protein 2, chloroplastic (MSL2) from Arabidopsis thaliana (Mouse-ear cress).